Consider the following 87-residue polypeptide: Acylphosphatase (87 aa).

The Acylphosphatase-like domain maps to 2–87 (RLTALVSGHV…ETGLREFHIY (86 aa)). Active-site residues include arginine 17 and asparagine 35.

Belongs to the acylphosphatase family.

It carries out the reaction an acyl phosphate + H2O = a carboxylate + phosphate + H(+). This Deinococcus radiodurans (strain ATCC 13939 / DSM 20539 / JCM 16871 / CCUG 27074 / LMG 4051 / NBRC 15346 / NCIMB 9279 / VKM B-1422 / R1) protein is Acylphosphatase (acyP).